The following is an 899-amino-acid chain: Translation initiation factor IF-2 (899 aa).

Disordered regions lie at residues 94-167 (TFTK…VVVK) and 259-309 (FNQE…HGFE). Basic and acidic residues predominate over residues 107–121 (AKARQETEERTRPQE). The span at 147-164 (RAAQQKETAKTTSTTTEV) shows a compositional bias: low complexity. Residues 399–568 (TRPPVVTIMG…LIQSELMELK (170 aa)) enclose the tr-type G domain. The segment at 408-415 (GHVDHGKT) is G1. A GTP-binding site is contributed by 408-415 (GHVDHGKT). Residues 433–437 (GITQH) are G2. The interval 454–457 (DTPG) is G3. GTP-binding positions include 454 to 458 (DTPGH) and 508 to 511 (NKMD). The tract at residues 508 to 511 (NKMD) is G4. The segment at 544 to 546 (SAH) is G5.

It belongs to the TRAFAC class translation factor GTPase superfamily. Classic translation factor GTPase family. IF-2 subfamily.

Its subcellular location is the cytoplasm. Functionally, one of the essential components for the initiation of protein synthesis. Protects formylmethionyl-tRNA from spontaneous hydrolysis and promotes its binding to the 30S ribosomal subunits. Also involved in the hydrolysis of GTP during the formation of the 70S ribosomal complex. This Acinetobacter baylyi (strain ATCC 33305 / BD413 / ADP1) protein is Translation initiation factor IF-2.